The primary structure comprises 312 residues: Fasciclin-like arabinogalactan protein elcF (312 aa).

A signal peptide spans 1-16; that stretch reads MKLFTLLLPALTSAHS. FAS1 domains follow at residues 17–160 and 162–289; these read LSTL…NASM and LPHN…DKVL. N-linked (GlcNAc...) asparagine glycosylation is found at N48, N68, N113, N157, and N165.

It belongs to the fasciclin-like AGP family.

It functions in the pathway secondary metabolite biosynthesis. Fasciclin-like arabinogalactan protein; part of the gene cluster that mediates the biosynthesis of elsinochrome C, a perelyenequinone phytotoxin structurally similar to cercosporin. The first step of elsinochrome C biosynthesis is performed by the polyketide synthase elcA which catalyzes the formation of nor-toralactone. The starter unit acyltransferase (SAT) domain of elcA initiates polyketide extension by the selective utilization of acetyl-CoA, which is elongated to the heptaketide in the beta-ketoacyl synthase (KS) domain by successive condensations with six malonyl units introduced by the malonyl acyltransferase (MAT) domain. The product template (PT) domain catalyzes C4-C9 and C2-C11 aldol cyclizations and dehydrations to a trihydroxynaphthalene, which is thought to be delivered to the thioesterase (TE) domain for product release. The bifunctional enzyme elcB then methylates nor-toralactone to toralactone before conducting an unusual oxidative aromatic ring opening. The next step in perylenequinone biosynthesis is an O-methylation at the nascent OH-6 of the elcB product performed by the O-methyltransferase elcD. The oxidative coupling of the two monomeric naphthol units in perylenequinone biosynthesis is catalyzed by the FAD-dependent monooxygenase elcE and the multicopper oxidase elcG. ElcG might catalyze the first intermolecular coupling in a regio- and stereo-selective manner via a phenol radical coupling mechanism and the elcE could forge the second C-C bond intramolecularly via a hydride transfer mechanism. The fasciclin domain-containing protein elcF might also play a role duting this step. The last piece of the puzzle in the biosynthesis of elsinochrome C is the additional annulation by enolate coupling to afford the dihydrobenzo(ghi)perylenequinone system, catalyzed by the FAD-dependent monooxygenase elcH. The protein is Fasciclin-like arabinogalactan protein elcF of Phaeosphaeria nodorum (strain SN15 / ATCC MYA-4574 / FGSC 10173) (Glume blotch fungus).